The chain runs to 229 residues: Large ribosomal subunit protein uL1 (229 aa).

The protein belongs to the universal ribosomal protein uL1 family. As to quaternary structure, part of the 50S ribosomal subunit.

Functionally, binds directly to 23S rRNA. The L1 stalk is quite mobile in the ribosome, and is involved in E site tRNA release. In terms of biological role, protein L1 is also a translational repressor protein, it controls the translation of the L11 operon by binding to its mRNA. This is Large ribosomal subunit protein uL1 from Actinobacillus pleuropneumoniae serotype 3 (strain JL03).